Reading from the N-terminus, the 135-residue chain is uncharacterized protein (135 aa).

The next 3 helical transmembrane spans lie at 13–35 (AKVI…AMYL), 82–101 (VAVF…LLSI), and 108–130 (IYRI…PLIL).

The protein resides in the cell membrane. This is an uncharacterized protein from Archaeoglobus fulgidus (strain ATCC 49558 / DSM 4304 / JCM 9628 / NBRC 100126 / VC-16).